A 97-amino-acid chain; its full sequence is Serine protease inhibitor Kazal-type 13 (97 aa).

Residues 1–26 (MKRSGCWHQRMLLSLVLLTWTHVTFS) form the signal peptide. A glycan (N-linked (GlcNAc...) asparagine) is linked at asparagine 33. Residues 36–97 (RWPKPPCKMY…IQFVKYGKCE (62 aa)) enclose the Kazal-like domain. Intrachain disulfides connect cysteine 42–cysteine 78, cysteine 56–cysteine 75, and cysteine 64–cysteine 96.

The protein resides in the secreted. May be a serine protease inhibitor. Essential for sperm maturation and fertility. Inhibits sperm acrosome reaction, protecting sperm from premature reaction. The polypeptide is Serine protease inhibitor Kazal-type 13 (Spink13) (Mus musculus (Mouse)).